The chain runs to 82 residues: MDCRLGCGACCIAPSISSPIPGMPNGKPAGVRCVQLNEDNLCQLFGRPERPKVCHDFKACPVVCGKTNQQALANLTELERLT.

Belongs to the UPF0153 family.

The sequence is that of UPF0153 protein VC_1057 from Vibrio cholerae serotype O1 (strain ATCC 39315 / El Tor Inaba N16961).